The primary structure comprises 541 residues: Glucose-6-phosphate isomerase (541 aa).

Glu-346 (proton donor) is an active-site residue. Residues His-377 and Lys-506 contribute to the active site.

This sequence belongs to the GPI family.

The protein resides in the cytoplasm. The enzyme catalyses alpha-D-glucose 6-phosphate = beta-D-fructose 6-phosphate. It functions in the pathway carbohydrate biosynthesis; gluconeogenesis. Its pathway is carbohydrate degradation; glycolysis; D-glyceraldehyde 3-phosphate and glycerone phosphate from D-glucose: step 2/4. Catalyzes the reversible isomerization of glucose-6-phosphate to fructose-6-phosphate. The polypeptide is Glucose-6-phosphate isomerase (Rhizobium etli (strain ATCC 51251 / DSM 11541 / JCM 21823 / NBRC 15573 / CFN 42)).